Reading from the N-terminus, the 1172-residue chain is Lysylphosphatidylglycerol biosynthesis bifunctional protein LysX (1172 aa).

Residues Met1–Arg34 form a disordered region. The segment at Met1–Asp663 is phosphatidylglycerol lysyltransferase. Over residues Val17 to Asp31 the composition is skewed to polar residues. A run of 7 helical transmembrane segments spans residues Val80 to Val100, Phe122 to Ala142, Ile146 to Ile166, Phe177 to Tyr197, Ala214 to Phe234, Ala272 to Ser292, and Val612 to Ser632. Positions Val664–His1172 are lysine--tRNA ligase. The segment at residues Val726–Ile804 is a DNA-binding region (OB). 2 residues coordinate Mg(2+): Asp1084 and Glu1091.

It in the N-terminal section; belongs to the LPG synthetase family. In the C-terminal section; belongs to the class-II aminoacyl-tRNA synthetase family. The cofactor is Mg(2+).

It localises to the cell membrane. The catalysed reaction is tRNA(Lys) + L-lysine + ATP = L-lysyl-tRNA(Lys) + AMP + diphosphate. It carries out the reaction L-lysyl-tRNA(Lys) + a 1,2-diacyl-sn-glycero-3-phospho-(1'-sn-glycerol) = a 1,2-diacyl-sn-glycero-3-phospho-1'-(3'-O-L-lysyl)-sn-glycerol + tRNA(Lys). Functionally, catalyzes the production of L-lysyl-tRNA(Lys)transfer and the transfer of a lysyl group from L-lysyl-tRNA(Lys) to membrane-bound phosphatidylglycerol (PG), which produces lysylphosphatidylglycerol (LPG), one of the components of the bacterial membrane with a positive net charge. LPG synthesis contributes to the resistance to cationic antimicrobial peptides (CAMPs) and likely protects M.tuberculosis against the CAMPs produced by competiting microorganisms (bacteriocins). In fact, the modification of anionic phosphatidylglycerol with positively charged L-lysine results in repulsion of the peptides. This Mycobacterium bovis (strain BCG / Pasteur 1173P2) protein is Lysylphosphatidylglycerol biosynthesis bifunctional protein LysX (lysX).